The chain runs to 116 residues: MRHGKAGRKLNRNSSARVALARAQATALLREGRIQTTLTKAKELRPFVEQLITTAKGGDLHSRRLVAQDIHDKDVVRKVMDEVAPKYAERPGGYTRILRVGTRRGDGVTMALIELV.

It belongs to the bacterial ribosomal protein bL17 family. Part of the 50S ribosomal subunit. Contacts proteins L3 and L32.

In terms of biological role, binds to the 23S rRNA. In Deinococcus radiodurans (strain ATCC 13939 / DSM 20539 / JCM 16871 / CCUG 27074 / LMG 4051 / NBRC 15346 / NCIMB 9279 / VKM B-1422 / R1), this protein is Large ribosomal subunit protein bL17.